We begin with the raw amino-acid sequence, 307 residues long: UDP-3-O-acyl-N-acetylglucosamine deacetylase (307 aa).

Zn(2+) contacts are provided by His-78, His-241, and Asp-245. His-268 serves as the catalytic Proton donor.

It belongs to the LpxC family. Requires Zn(2+) as cofactor.

The catalysed reaction is a UDP-3-O-[(3R)-3-hydroxyacyl]-N-acetyl-alpha-D-glucosamine + H2O = a UDP-3-O-[(3R)-3-hydroxyacyl]-alpha-D-glucosamine + acetate. Its pathway is glycolipid biosynthesis; lipid IV(A) biosynthesis; lipid IV(A) from (3R)-3-hydroxytetradecanoyl-[acyl-carrier-protein] and UDP-N-acetyl-alpha-D-glucosamine: step 2/6. Functionally, catalyzes the hydrolysis of UDP-3-O-myristoyl-N-acetylglucosamine to form UDP-3-O-myristoylglucosamine and acetate, the committed step in lipid A biosynthesis. This chain is UDP-3-O-acyl-N-acetylglucosamine deacetylase, found in Polaromonas sp. (strain JS666 / ATCC BAA-500).